Here is a 569-residue protein sequence, read N- to C-terminus: BICD family-like cargo adapter 1 (569 aa).

The interval 1–36 (MSASCLDLISAPPQPDSDRMDRALNPGRQNSPDTAG) is disordered. Residues 97–101 (AAKLG) carry the CC1 box motif. The stretch at 102–283 (KALLERNQDL…TLELEKHCHH (182 aa)) forms a coiled coil. The segment at 385–405 (ALSTDSSMDESSETLSAKDVP) is disordered. Residues 458–520 (NEQLQSAIRD…LEAWQDDMHR (63 aa)) adopt a coiled-coil conformation. Residues 533-554 (EWKDPPFSFSRRGAAASRPTQR) form a disordered region.

It belongs to the BICDR family. Part of a tripartite complex with dynein and dynactin, acts an adapter linking the dynein motor complex and dynactin. Highly expressed in developing neural tissues and developing eye.

The protein resides in the cytoplasm. It is found in the cytoskeleton. The protein localises to the microtubule organizing center. It localises to the centrosome. Its function is as follows. Acts as an adapter protein linking the dynein motor complex to various cargos and converts dynein from a non-processive to a highly processive motor in the presence of dynactin. Facilitates the interaction between dynein and dynactin and activates dynein processivity (the ability to move along a microtubule for a long distance without falling off the track). Predominantly recruits 2 dyneins, which increases both the force and speed of the microtubule motor. Component of secretory vesicle machinery in developing neurons that acts as a regulator of neurite outgrowth. Regulates the secretory vesicle transport by controlling the accumulation of Rab6-containing secretory vesicles in the pericentrosomal region restricting anterograde secretory transport during the early phase of neuronal differentiation, thereby inhibiting neuritogenesis. In Danio rerio (Zebrafish), this protein is BICD family-like cargo adapter 1 (bicdl1).